A 97-amino-acid chain; its full sequence is Large ribosomal subunit protein uL23 (97 aa).

This sequence belongs to the universal ribosomal protein uL23 family. As to quaternary structure, part of the 50S ribosomal subunit. Contacts protein L29, and trigger factor when it is bound to the ribosome.

Functionally, one of the early assembly proteins it binds 23S rRNA. One of the proteins that surrounds the polypeptide exit tunnel on the outside of the ribosome. Forms the main docking site for trigger factor binding to the ribosome. This is Large ribosomal subunit protein uL23 from Bartonella henselae (strain ATCC 49882 / DSM 28221 / CCUG 30454 / Houston 1) (Rochalimaea henselae).